The primary structure comprises 326 residues: Undecaprenyl-diphosphatase (326 aa).

The next 9 membrane-spanning stretches (helical) occupy residues 11 to 31 (AFSL…IAVA), 42 to 62 (TGVI…LGFI), 90 to 110 (GVAF…WYFW), 138 to 158 (LGIG…KLLV), 165 to 185 (FFRS…LLAL), 212 to 232 (ALAL…GLFI), 242 to 262 (FSFL…LKGL), 272 to 292 (ILPL…AIAW), and 304 to 324 (IFVW…GMGF).

The protein belongs to the UppP family.

It localises to the cell inner membrane. It carries out the reaction di-trans,octa-cis-undecaprenyl diphosphate + H2O = di-trans,octa-cis-undecaprenyl phosphate + phosphate + H(+). Functionally, catalyzes the dephosphorylation of undecaprenyl diphosphate (UPP). Confers resistance to bacitracin. The sequence is that of Undecaprenyl-diphosphatase from Synechocystis sp. (strain ATCC 27184 / PCC 6803 / Kazusa).